The sequence spans 239 residues: Glucosamine-6-phosphate deaminase (239 aa).

Aspartate 62 functions as the Proton acceptor; for enolization step in the catalytic mechanism. The active-site For ring-opening step is the asparagine 128. Histidine 130 functions as the Proton acceptor; for ring-opening step in the catalytic mechanism. The active-site For ring-opening step is glutamate 135.

The protein belongs to the glucosamine/galactosamine-6-phosphate isomerase family. NagB subfamily.

It catalyses the reaction alpha-D-glucosamine 6-phosphate + H2O = beta-D-fructose 6-phosphate + NH4(+). Its pathway is amino-sugar metabolism; N-acetylneuraminate degradation; D-fructose 6-phosphate from N-acetylneuraminate: step 5/5. Functionally, catalyzes the reversible isomerization-deamination of glucosamine 6-phosphate (GlcN6P) to form fructose 6-phosphate (Fru6P) and ammonium ion. The chain is Glucosamine-6-phosphate deaminase from Lactobacillus helveticus (strain DPC 4571).